The sequence spans 450 residues: LanC-like protein 2 (450 aa).

Gly2 carries N-myristoyl glycine lipidation. The tract at residues Gly2 to Gly14 is interaction with inositol phospholipids. A Phosphotyrosine modification is found at Tyr198.

This sequence belongs to the LanC-like protein family. Interacts with an array of inositol phospholipids such as phosphatidylinositol 3-phosphate (PI3P), phosphatidylinositol 4-phosphate (PI4P) and phosphatidylinositol 5-phosphate (PI5P). PIP-binding enhances membrane association. Myristoylated. Essential for membrane association.

The protein localises to the nucleus. It localises to the cytoplasm. Its subcellular location is the cell membrane. Functionally, necessary for abscisic acid (ABA) binding on the cell membrane and activation of the ABA signaling pathway in granulocytes. This chain is LanC-like protein 2 (Lancl2), found in Mus musculus (Mouse).